Consider the following 168-residue polypeptide: MVLLETNRLRLQTIDIPLLDAASKQDHQAIKELGYETNGEWPNSDFFEAIPYFREILVKNNGTKGFDSWIIVKKDNYEIVGGTGFLGDPDENGMIEIGFATNKSHRRKGYCVEAAQKLINWALSRETVSRITARCEHDNLGSQKTLEKLGFILNHKSAEYKHWIYVTK.

The region spanning 14 to 168 (IDIPLLDAAS…EYKHWIYVTK (155 aa)) is the N-acetyltransferase domain.

Belongs to the acetyltransferase family.

This is an uncharacterized protein from Bacillus subtilis (strain 168).